The following is a 304-amino-acid chain: 2-oxoacid:ferredoxin oxidoreductase 2, subunit beta (304 aa).

Positions 12, 15, and 46 each coordinate [4Fe-4S] cluster. Thiamine diphosphate is bound by residues 44–47 (IGCS) and His-65. Asp-90 contacts Mg(2+). Position 91–92 (91–92 (GD)) interacts with thiamine diphosphate. Mg(2+)-binding residues include Asn-118 and Val-120. Position 122–123 (122–123 (GL)) interacts with thiamine diphosphate. A [4Fe-4S] cluster-binding site is contributed by Cys-197.

As to quaternary structure, heterodimer composed of an alpha and a beta subunit. [4Fe-4S] cluster serves as cofactor. Requires thiamine diphosphate as cofactor. The cofactor is Mg(2+).

It catalyses the reaction a 2-oxocarboxylate + 2 oxidized [2Fe-2S]-[ferredoxin] + CoA = an acyl-CoA + 2 reduced [2Fe-2S]-[ferredoxin] + CO2 + H(+). Functionally, catalyzes the coenzyme A-dependent oxidative decarboxylation of different 2-oxoacids such as 2-oxoglutarate, pyruvate and 2-oxobutyrate to form their CoA derivatives. The sequence is that of 2-oxoacid:ferredoxin oxidoreductase 2, subunit beta from Sulfurisphaera tokodaii (strain DSM 16993 / JCM 10545 / NBRC 100140 / 7) (Sulfolobus tokodaii).